The primary structure comprises 348 residues: uncharacterized protein (348 aa).

This is an uncharacterized protein from Geobacillus kaustophilus (strain HTA426).